The chain runs to 346 residues: Cytosolic sulfotransferase 17 (346 aa).

A 3'-phosphoadenylyl sulfate-binding site is contributed by 89–94; it reads KTGTTW. The active-site Proton acceptor is the H151. Residues R173, S181, Y239, and 309–311 each bind 3'-phosphoadenylyl sulfate; that span reads RKG.

Belongs to the sulfotransferase 1 family. As to expression, highly expressed in roots, stems and mature leaves. Low expression in young leaves and flowers. Barely detected in siliques.

The protein localises to the cytoplasm. It catalyses the reaction an aliphatic (Z)-desulfo-glucosinolate + 3'-phosphoadenylyl sulfate = a (Z)-omega-(methylsulfanyl)-N-sulfo-alkylhydroximate S-glucoside + adenosine 3',5'-bisphosphate + H(+). Its activity is regulated as follows. Inhibited by phosphoadenosine 5'-phosphate (PAP). Sulfotransferase that utilizes 3'-phospho-5'-adenylyl sulfate (PAPS) as sulfonate donor to catalyze the sulfate conjugation of desulfo-glucosinolates (dsGSs), the final step in the biosynthesis of the glucosinolate core structure. Substrate preference is desulfo-benzyl glucosinolate &gt; desulfo-6-methylthiohexyl glucosinolate. Increased specific activity with increasing chain length of desulfo-glucosinolate derived from methionine. Preferred substrate is desulfo-8-methylthiooctyl glucosinolate. This is Cytosolic sulfotransferase 17 (SOT17) from Arabidopsis thaliana (Mouse-ear cress).